The sequence spans 259 residues: Aliphatic sulfonates import ATP-binding protein SsuB 2 (259 aa).

Positions 17–238 constitute an ABC transporter domain; sequence LDILGLWKGF…VRSSQAFTSI (222 aa). Position 49 to 56 (49 to 56) interacts with ATP; it reads GRSGCGKS.

The protein belongs to the ABC transporter superfamily. Aliphatic sulfonates importer (TC 3.A.1.17.2) family. In terms of assembly, the complex is composed of two ATP-binding proteins (SsuB), two transmembrane proteins (SsuC) and a solute-binding protein (SsuA).

Its subcellular location is the cell inner membrane. The catalysed reaction is ATP + H2O + aliphatic sulfonate-[sulfonate-binding protein]Side 1 = ADP + phosphate + aliphatic sulfonateSide 2 + [sulfonate-binding protein]Side 1.. Its function is as follows. Part of the ABC transporter complex SsuABC involved in aliphatic sulfonates import. Responsible for energy coupling to the transport system. This Agrobacterium fabrum (strain C58 / ATCC 33970) (Agrobacterium tumefaciens (strain C58)) protein is Aliphatic sulfonates import ATP-binding protein SsuB 2.